We begin with the raw amino-acid sequence, 408 residues long: Homogentisate geranylgeranyltransferase (408 aa).

The N-terminal 68 residues, 1–68 (MQATTAAAAA…SAISQATSPR (68 aa)), are a transit peptide targeting the chloroplast. The next 9 membrane-spanning stretches (helical) occupy residues 122 to 142 (HTIF…MKSI), 149 to 169 (VLKG…YVVG), 194 to 214 (SVAT…SIGI), 217 to 237 (GSVP…AYSI), 248 to 268 (ALLA…LAFF), 286 to 306 (LVFA…FKDI), 329 to 349 (VYQL…VVGA), 352 to 372 (THLL…LTLW), and 386 to 406 (VTSF…LIPF).

Belongs to the UbiA prenyltransferase family.

Its subcellular location is the plastid. The protein localises to the chloroplast membrane. The enzyme catalyses homogentisate + (2E,6E,10E)-geranylgeranyl diphosphate + H(+) = 6-geranylgeranyl-2-methylbenzene-1,4-diol + CO2 + diphosphate. It functions in the pathway cofactor biosynthesis; tocopherol biosynthesis. Its function is as follows. Involved in the synthesis of tocotrienol (vitamin E). Catalyzes the condensation of homogentisate and geranylgeranyl diphosphate to form 2-methyl-6-geranylgeranylbenzoquinol. Possesses low activity with phytyl diphosphate as substrate. This is Homogentisate geranylgeranyltransferase from Triticum aestivum (Wheat).